We begin with the raw amino-acid sequence, 911 residues long: Disks large homolog 1 (911 aa).

Residues arginine 4 to proline 64 enclose the L27 domain. Serine 39 is modified (phosphoserine; by CaMK2). The segment at serine 70–valine 105 is disordered. Polar residues predominate over residues glutamate 83 to serine 96. Phosphoserine occurs at positions 122, 138, and 158. The segment at proline 162–tyrosine 212 is interaction with SH3 domains. PDZ domains are found at residues glutamate 224–arginine 310 and glutamate 318–proline 404. The required for interaction with MARCHF2 stretch occupies residues glutamate 224–arginine 545. A Phosphoserine; by CaMK2 modification is found at serine 232. Phosphotyrosine is present on tyrosine 398. Positions threonine 419–alanine 441 are enriched in polar residues. The interval threonine 419–proline 443 is disordered. The region spanning lysine 465–arginine 545 is the PDZ 3 domain. Residues serine 567, serine 572, serine 574, serine 578, serine 597, serine 618, serine 684, serine 687, and serine 841 each carry the phosphoserine modification. An SH3 domain is found at lysine 580–glutamate 650. A disordered region spans residues lysine 662–tyrosine 696. The Guanylate kinase-like domain occupies threonine 721–glutamate 896.

This sequence belongs to the MAGUK family. As to quaternary structure, homotetramer. Interacts (via guanylate kinase-like domain) with DLGAP1, DLGAP2, DLGAP3, DLGAP4 and MAP1A. Interacts (via guanylate kinase-like domain) with KIF13B. May interact with HTR2A. Interacts (via PDZ domains) with GRIA1. Interacts (via PDZ domains) with GRIN2A. Interacts (via PDZ domains) with KCND2 and KCND3. Interacts (via PDZ domains) with KCNA1, KCNA2, KCNA3 and KCNA4. Interacts (via PDZ domains) with ADGRA3. Interacts with KCNF1. Interacts with CAMK2. Interacts with cytoskeleton-associated protein EPB41. Interacts with cytoskeleton-associated protein EZR. Found in a complex with KCNA5 and CAV3. Found in a complex with APC and CTNNB1. Interacts (via PDZ domains) with APC. Interacts with CDH1 through binding to PIK3R1. Forms multiprotein complexes with CASK, LIN7A, LIN7B, LIN7C, APBA1, and KCNJ12. Interacts with TOPK. Forms a tripartite complex composed of DLG1, MPP7 and LIN7 (LIN7A or LIN7C). May interact with TJAP1. Interacts with PTEN. Interacts with FRMPD4 (via C-terminus). Interacts with LRFN1 and LRFN2. Interacts with LRFN4 and SFPQ. Interacts (via PDZ domains) with ADGRA2 (via PDZ-binding motif). Interacts with ADAM10; this interaction recruits ADAM10 to the cell membrane during long-term depression in hippocampal neurons. Interacts with DGKI (via PDZ-binding motif). Interacts (via PDZ domains) with MARCHF2 (via PDZ domain); the interaction leads to DLG1 ubiqtuitination and degradation. Interacts (via N-terminus) with MPP3; this interaction connects CADM1 with DLG1 and links CADM1 with the regulatory subunit of phosphoinositide-3-kinase (PI3K) by forming a multiprotein complex and participates in cell spreading. In terms of processing, phosphorylated by MAPK12. Phosphorylation of Ser-39 modulates transport to the plasma membrane. Phosphorylation of Ser-232 regulates association with GRIN2A. Post-translationally, ubiquitinated; by MARCHF2 which results in its degradation. Widely expressed. Strongly expressed in epithelial cells, in the small intestine it is only detected in the vili. Expressed in brain, heart (at protein level), muscle, lung and liver. In the brain it was detected in olfactory bulbs, cerebral cortex, hippocampus, and spinal cord (at protein level).

The protein localises to the cell membrane. It localises to the basolateral cell membrane. Its subcellular location is the endoplasmic reticulum membrane. It is found in the postsynaptic density. The protein resides in the synapse. The protein localises to the sarcolemma. It localises to the cell junction. Its subcellular location is the cytoplasm. It is found in the apical cell membrane. Its function is as follows. Essential multidomain scaffolding protein required for normal development. Recruits channels, receptors and signaling molecules to discrete plasma membrane domains in polarized cells. Promotes epithelial cell layer barrier function via maintaining cell-cell adhesion. May play a role in adherens junction assembly, signal transduction, cell proliferation, synaptogenesis and lymphocyte activation. Regulates the excitability of cardiac myocytes by modulating the functional expression of Kv4 channels. Functional regulator of Kv1.5 channel. During long-term depression in hippocampal neurons, it recruits ADAM10 to the plasma membrane. In Rattus norvegicus (Rat), this protein is Disks large homolog 1.